The chain runs to 360 residues: Phospho-N-acetylmuramoyl-pentapeptide-transferase (360 aa).

A run of 10 helical transmembrane segments spans residues 27-47, 73-93, 97-117, 132-152, 164-184, 199-219, 236-256, 263-283, 288-308, and 337-357; these read ILSV…MIRM, TMGG…WGDL, FVWI…VDDW, WKYL…FFTA, FFKS…YFVI, GLAI…AYAG, AGEL…FLWF, VFMG…MAVI, IVLF…MLQV, and KIIV…LATL.

It belongs to the glycosyltransferase 4 family. MraY subfamily. Requires Mg(2+) as cofactor.

It is found in the cell inner membrane. It carries out the reaction UDP-N-acetyl-alpha-D-muramoyl-L-alanyl-gamma-D-glutamyl-meso-2,6-diaminopimeloyl-D-alanyl-D-alanine + di-trans,octa-cis-undecaprenyl phosphate = di-trans,octa-cis-undecaprenyl diphospho-N-acetyl-alpha-D-muramoyl-L-alanyl-D-glutamyl-meso-2,6-diaminopimeloyl-D-alanyl-D-alanine + UMP. It participates in cell wall biogenesis; peptidoglycan biosynthesis. Its function is as follows. Catalyzes the initial step of the lipid cycle reactions in the biosynthesis of the cell wall peptidoglycan: transfers peptidoglycan precursor phospho-MurNAc-pentapeptide from UDP-MurNAc-pentapeptide onto the lipid carrier undecaprenyl phosphate, yielding undecaprenyl-pyrophosphoryl-MurNAc-pentapeptide, known as lipid I. The polypeptide is Phospho-N-acetylmuramoyl-pentapeptide-transferase (Alcanivorax borkumensis (strain ATCC 700651 / DSM 11573 / NCIMB 13689 / SK2)).